Consider the following 132-residue polypeptide: Mite allergen Der p 5 (132 aa).

Immunodominant conformational IgE-binding epitope stretches follow at residues 25–53 (DYQN…FYLQ) and 102–132 (EQYN…KIEV).

The protein belongs to the mite group 5 allergen family. In terms of assembly, monomer. Trimer of homodimers. Oligomerizes in a concentration-dependent manner.

This Dermatophagoides pteronyssinus (European house dust mite) protein is Mite allergen Der p 5 (DERP5).